A 280-amino-acid polypeptide reads, in one-letter code: Chlorophyll a-b binding protein CP26, chloroplastic (280 aa).

The N-terminal 48 residues, 1–48 (MASLGVSEMLGTPLNFRAVSRSSAPLASSPSTFKTVALFSKKKPAPAK), are a transit peptide targeting the chloroplast. Position 70 (F70) interacts with chlorophyll b. 3 residues coordinate chlorophyll a: Y95, E114, and H117. 2 consecutive transmembrane segments (helical) span residues 110–130 (YQAF…GFII) and 167–187 (IPIN…GAEY). R119, I167, E186, and R189 together coordinate chlorophyll b. Chlorophyll a contacts are provided by K224, E225, N228, R230, Q242, and H257. A helical membrane pass occupies residues 231 to 251 (LAMFAMLGFFIQAYVTGEGPV).

Belongs to the light-harvesting chlorophyll a/b-binding (LHC) protein family. In terms of assembly, forms heterotrimers with LHCB3. The LHC complex consists of chlorophyll a-b binding proteins. Requires Binds at least 14 chlorophylls (8 Chl-a and 6 Chl-b) and carotenoids such as lutein and neoxanthin. as cofactor. In terms of processing, photoregulated by reversible phosphorylation of its threonine residues.

The protein resides in the plastid. The protein localises to the chloroplast thylakoid membrane. Functionally, the light-harvesting complex (LHC) functions as a light receptor, it captures and delivers excitation energy to photosystems with which it is closely associated. The sequence is that of Chlorophyll a-b binding protein CP26, chloroplastic (LHCB5) from Arabidopsis thaliana (Mouse-ear cress).